Here is a 492-residue protein sequence, read N- to C-terminus: Coagulation factor X (492 aa).

An N-terminal signal peptide occupies residues 1 to 23 (MAGLLHLVLLSTALGGLLRPAGS). A propeptide spanning residues 24–40 (VFLPRDQAHRVLQRARR) is cleaved from the precursor. A Gla domain is found at 41–85 (ANSFLEEVKQGNLERECLEEACSLEEAREVFEDAEQTDEFWSKYK). 12 positions are modified to 4-carboxyglutamate: Glu-46, Glu-47, Glu-54, Glu-56, Glu-59, Glu-60, Glu-65, Glu-66, Glu-69, Glu-72, Glu-75, and Glu-79. The cysteines at positions 57 and 62 are disulfide-linked. Residues 86-122 (DGDQCEGHPCLNQGHCKDGIGDYTCTCAEGFEGKNCE) enclose the EGF-like 1; calcium-binding domain. 11 disulfides stabilise this stretch: Cys-90–Cys-101, Cys-95–Cys-110, Cys-112–Cys-121, Cys-129–Cys-140, Cys-136–Cys-149, Cys-151–Cys-164, Cys-172–Cys-341, Cys-240–Cys-245, Cys-260–Cys-276, Cys-389–Cys-403, and Cys-414–Cys-442. Asp-103 carries the (3R)-3-hydroxyaspartate modification. In terms of domain architecture, EGF-like 2 spans 125-165 (TREICSLDNGGCDQFCREERSEVRCSCAHGYVLGDDSKSCV). A propeptide spans 183–233 (WAIHTSEDALDASELEHYDPADLSPTESSLDLLGLNRTEPSAGEDGSQVVR) (activation peptide). Position 200 is a sulfotyrosine (Tyr-200). An O-linked (GalNAc...) threonine glycan is attached at Thr-208. Asn-218 is a glycosylation site (N-linked (GlcNAc...) asparagine). In terms of domain architecture, Peptidase S1 spans 234–466 (IVGGRDCAEG…FLKWIDKIMK (233 aa)). Active-site charge relay system residues include His-275 and Asp-321. The active-site Charge relay system is the Ser-418. The segment at 472–492 (AGSRGHSEAPATWTVPPPLPL) is disordered. Positions 476 to 492 (GHSEAPATWTVPPPLPL) are cleaved as a propeptide — may be removed but is not necessary for activation. Thr-485 carries an O-linked (GalNAc...) threonine glycan.

The protein belongs to the peptidase S1 family. The two chains are formed from a single-chain precursor by the excision of two Arg residues and are held together by 1 or more disulfide bonds. Forms a heterodimer with SERPINA5. Interacts (activated) with guianensin, an anticoagulant protein from Simulium guianense saliva. Interacts (activated) with simukunin, an anticoagulant protein from Simulium vittatum saliva. The vitamin K-dependent, enzymatic carboxylation of some glutamate residues allows the modified protein to bind calcium. Post-translationally, N- and O-glycosylated. In terms of processing, proteolytically cleaved and activated by cathepsin CTSG. The activation peptide is cleaved by factor IXa (in the intrinsic pathway), or by factor VIIa (in the extrinsic pathway). The iron and 2-oxoglutarate dependent 3-hydroxylation of aspartate and asparagine is (R) stereospecific within EGF domains.

It is found in the secreted. The catalysed reaction is Selective cleavage of Arg-|-Thr and then Arg-|-Ile bonds in prothrombin to form thrombin.. With respect to regulation, inhibited by SERPINA5. Factor Xa is a vitamin K-dependent glycoprotein that converts prothrombin to thrombin in the presence of factor Va, calcium and phospholipid during blood clotting. Factor Xa activates pro-inflammatory and pro-fibrotic signaling pathways in a protease-activated receptor (PAR)-dependent manner. The chain is Coagulation factor X (F10) from Bos taurus (Bovine).